A 208-amino-acid polypeptide reads, in one-letter code: Small ribosomal subunit protein uS4 (208 aa).

The 63-residue stretch at Arg-95–Asn-157 folds into the S4 RNA-binding domain.

It belongs to the universal ribosomal protein uS4 family. In terms of assembly, part of the 30S ribosomal subunit. Contacts protein S5. The interaction surface between S4 and S5 is involved in control of translational fidelity.

One of the primary rRNA binding proteins, it binds directly to 16S rRNA where it nucleates assembly of the body of the 30S subunit. Its function is as follows. With S5 and S12 plays an important role in translational accuracy. This chain is Small ribosomal subunit protein uS4, found in Borreliella burgdorferi (strain ATCC 35210 / DSM 4680 / CIP 102532 / B31) (Borrelia burgdorferi).